A 163-amino-acid chain; its full sequence is EF-hand calcium-binding domain-containing protein 11 (163 aa).

EF-hand domains are found at residues 18 to 53 (SEHRKWVEVFKACDEDHKGYLSREDFKTAVVMLFGY), 91 to 126 (RYRNEVRHIFTAFDTYYRGFLTLEDFKKAFRQVAPK), and 127 to 162 (LPERTVLEVFREVDRDSDGHVSFRDFEYALNYGQKE). Ca(2+) is bound by residues Asp-140, Asp-142, Asp-144, His-146, and Asp-151.

This chain is EF-hand calcium-binding domain-containing protein 11 (EFCAB11), found in Homo sapiens (Human).